Consider the following 274-residue polypeptide: Probable cyclic nucleotide phosphodiesterase RPA0124 (274 aa).

D8, H10, D49, N79, H155, H194, and H196 together coordinate Fe cation. AMP-binding positions include H10, D49, and 79–80; that span reads NH. H196 contacts AMP.

It belongs to the cyclic nucleotide phosphodiesterase class-III family. The cofactor is Fe(2+).

The chain is Probable cyclic nucleotide phosphodiesterase RPA0124 from Rhodopseudomonas palustris (strain ATCC BAA-98 / CGA009).